Here is a 256-residue protein sequence, read N- to C-terminus: 5'-nucleotidase SurE (256 aa).

A divalent metal cation is bound by residues Asp-13, Asp-14, Ser-44, and Asn-101.

The protein belongs to the SurE nucleotidase family. The cofactor is a divalent metal cation.

It localises to the cytoplasm. The catalysed reaction is a ribonucleoside 5'-phosphate + H2O = a ribonucleoside + phosphate. In terms of biological role, nucleotidase that shows phosphatase activity on nucleoside 5'-monophosphates. The chain is 5'-nucleotidase SurE from Porphyromonas gingivalis (strain ATCC 33277 / DSM 20709 / CIP 103683 / JCM 12257 / NCTC 11834 / 2561).